Here is a 102-residue protein sequence, read N- to C-terminus: ATP-dependent Clp protease adapter protein ClpS (102 aa).

The protein belongs to the ClpS family. In terms of assembly, binds to the N-terminal domain of the chaperone ClpA.

In terms of biological role, involved in the modulation of the specificity of the ClpAP-mediated ATP-dependent protein degradation. This is ATP-dependent Clp protease adapter protein ClpS from Shewanella baltica (strain OS155 / ATCC BAA-1091).